The following is a 365-amino-acid chain: Zinc finger MYND domain-containing protein 12 (365 aa).

Zn(2+) contacts are provided by Cys17, Cys20, Cys28, Cys31, Cys37, His41, His50, and Cys54. The MYND-type; atypical zinc finger occupies 17–54; it reads CEVCEAPAERVCAACTVTYYCGVVHQKADWDSIHEKIC. TPR repeat units lie at residues 172–205 and 214–247; these read SLLH…ASCA and SGGY…WHAY.

In terms of tissue distribution, expressed predominantly in the testis.

It localises to the cell projection. The protein resides in the cilium. The protein localises to the flagellum. Functionally, required for sperm flagellum function and male fertility. The chain is Zinc finger MYND domain-containing protein 12 (ZMYND12) from Homo sapiens (Human).